A 100-amino-acid chain; its full sequence is Succinate dehydrogenase subunit 7B, mitochondrial (100 aa).

A disordered region spans residues 1 to 25 (MAFLLNNASISSHLRSSSSQKTGDA). A mitochondrion-targeting transit peptide spans 1–32 (MAFLLNNASISSHLRSSSSQKTGDALSISRRG). The span at 9–19 (SISSHLRSSSS) shows a compositional bias: low complexity.

In terms of assembly, component of complex II composed of eight subunits in plants: four classical SDH subunits SDH1, SDH2, SDH3 and SDH4 (a flavoprotein (FP), an iron-sulfur protein (IP), and a cytochrome b composed of a large and a small subunit.), as well as four subunits unknown in mitochondria from bacteria and heterotrophic eukaryotes.

It localises to the mitochondrion inner membrane. Its pathway is carbohydrate metabolism; tricarboxylic acid cycle. The sequence is that of Succinate dehydrogenase subunit 7B, mitochondrial from Arabidopsis thaliana (Mouse-ear cress).